We begin with the raw amino-acid sequence, 425 residues long: Serine--tRNA ligase (425 aa).

230 to 232 (TAE) contacts L-serine. ATP is bound at residue 261–263 (RSE). Glutamate 284 is an L-serine binding site. An ATP-binding site is contributed by 348–351 (EISS). Residue serine 384 coordinates L-serine.

It belongs to the class-II aminoacyl-tRNA synthetase family. Type-1 seryl-tRNA synthetase subfamily. As to quaternary structure, homodimer. The tRNA molecule binds across the dimer.

The protein localises to the cytoplasm. The catalysed reaction is tRNA(Ser) + L-serine + ATP = L-seryl-tRNA(Ser) + AMP + diphosphate + H(+). It catalyses the reaction tRNA(Sec) + L-serine + ATP = L-seryl-tRNA(Sec) + AMP + diphosphate + H(+). Its pathway is aminoacyl-tRNA biosynthesis; selenocysteinyl-tRNA(Sec) biosynthesis; L-seryl-tRNA(Sec) from L-serine and tRNA(Sec): step 1/1. In terms of biological role, catalyzes the attachment of serine to tRNA(Ser). Is also able to aminoacylate tRNA(Sec) with serine, to form the misacylated tRNA L-seryl-tRNA(Sec), which will be further converted into selenocysteinyl-tRNA(Sec). The polypeptide is Serine--tRNA ligase (Streptococcus agalactiae serotype Ia (strain ATCC 27591 / A909 / CDC SS700)).